We begin with the raw amino-acid sequence, 433 residues long: Peptidoglycan glycosyltransferase RodA (433 aa).

The next 12 membrane-spanning stretches (helical) occupy residues 9–29, 44–64, 74–94, 100–120, 158–178, 181–201, 221–241, 249–269, 295–315, 341–361, 378–398, and 400–420; these read FDYL…LFIY, YLKQ…VSMY, TLIF…GRYV, WIGV…AYIL, LGTA…AGFP, LIFA…LPLW, LSLF…VGYL, YWIT…LLGV, WHII…MGYL, WGFV…LHTL, GVLG…MGIM, and ITGI…TAMI.

The protein belongs to the SEDS family. MrdB/RodA subfamily.

Its subcellular location is the cell inner membrane. It catalyses the reaction [GlcNAc-(1-&gt;4)-Mur2Ac(oyl-L-Ala-gamma-D-Glu-L-Lys-D-Ala-D-Ala)](n)-di-trans,octa-cis-undecaprenyl diphosphate + beta-D-GlcNAc-(1-&gt;4)-Mur2Ac(oyl-L-Ala-gamma-D-Glu-L-Lys-D-Ala-D-Ala)-di-trans,octa-cis-undecaprenyl diphosphate = [GlcNAc-(1-&gt;4)-Mur2Ac(oyl-L-Ala-gamma-D-Glu-L-Lys-D-Ala-D-Ala)](n+1)-di-trans,octa-cis-undecaprenyl diphosphate + di-trans,octa-cis-undecaprenyl diphosphate + H(+). It participates in cell wall biogenesis; peptidoglycan biosynthesis. In terms of biological role, peptidoglycan polymerase that is essential for cell wall elongation. The protein is Peptidoglycan glycosyltransferase RodA of Treponema pallidum (strain Nichols).